We begin with the raw amino-acid sequence, 265 residues long: Undecaprenyl-diphosphatase (265 aa).

8 helical membrane-spanning segments follow: residues 1-21 (MDIL…FLPI), 39-59 (QGLA…ILYF), 86-106 (WCII…GNFI), 112-132 (SVSV…FADA), 140-160 (LAQM…LAMI), 186-206 (FSFL…GLKL), 219-239 (VGVL…LSFI), and 244-264 (MLPF…LVWF).

The protein belongs to the UppP family.

The protein resides in the cell inner membrane. It catalyses the reaction di-trans,octa-cis-undecaprenyl diphosphate + H2O = di-trans,octa-cis-undecaprenyl phosphate + phosphate + H(+). In terms of biological role, catalyzes the dephosphorylation of undecaprenyl diphosphate (UPP). Confers resistance to bacitracin. The polypeptide is Undecaprenyl-diphosphatase (Saccharophagus degradans (strain 2-40 / ATCC 43961 / DSM 17024)).